A 95-amino-acid polypeptide reads, in one-letter code: Aspartyl/glutamyl-tRNA(Asn/Gln) amidotransferase subunit C (95 aa).

It belongs to the GatC family. Heterotrimer of A, B and C subunits.

It carries out the reaction L-glutamyl-tRNA(Gln) + L-glutamine + ATP + H2O = L-glutaminyl-tRNA(Gln) + L-glutamate + ADP + phosphate + H(+). The enzyme catalyses L-aspartyl-tRNA(Asn) + L-glutamine + ATP + H2O = L-asparaginyl-tRNA(Asn) + L-glutamate + ADP + phosphate + 2 H(+). Allows the formation of correctly charged Asn-tRNA(Asn) or Gln-tRNA(Gln) through the transamidation of misacylated Asp-tRNA(Asn) or Glu-tRNA(Gln) in organisms which lack either or both of asparaginyl-tRNA or glutaminyl-tRNA synthetases. The reaction takes place in the presence of glutamine and ATP through an activated phospho-Asp-tRNA(Asn) or phospho-Glu-tRNA(Gln). This is Aspartyl/glutamyl-tRNA(Asn/Gln) amidotransferase subunit C from Chlorobium limicola (strain DSM 245 / NBRC 103803 / 6330).